Consider the following 176-residue polypeptide: NAD(P)H-quinone oxidoreductase subunit 6, chloroplastic (176 aa).

Transmembrane regions (helical) follow at residues 10–30 (FLLVFLGSGLLVGGLGVVLLP), 32–52 (PIFSAFSLGFVLVCISLLYIL), 61–81 (AQLLIYVGAINVLIIFAVMFM), 92–112 (LWTVGDGITSLVCTTILFSLI), and 152–172 (FFLPFELISIILLVALVGAIS).

It belongs to the complex I subunit 6 family. In terms of assembly, NDH is composed of at least 16 different subunits, 5 of which are encoded in the nucleus.

It localises to the plastid. Its subcellular location is the chloroplast thylakoid membrane. It catalyses the reaction a plastoquinone + NADH + (n+1) H(+)(in) = a plastoquinol + NAD(+) + n H(+)(out). The enzyme catalyses a plastoquinone + NADPH + (n+1) H(+)(in) = a plastoquinol + NADP(+) + n H(+)(out). NDH shuttles electrons from NAD(P)H:plastoquinone, via FMN and iron-sulfur (Fe-S) centers, to quinones in the photosynthetic chain and possibly in a chloroplast respiratory chain. The immediate electron acceptor for the enzyme in this species is believed to be plastoquinone. Couples the redox reaction to proton translocation, and thus conserves the redox energy in a proton gradient. This is NAD(P)H-quinone oxidoreductase subunit 6, chloroplastic (ndhG) from Lobularia maritima (Sweet alyssum).